A 309-amino-acid chain; its full sequence is MTAKTIRHYLQFTDFSLEDYEYVLERTGILKRKFKNYETYHPLHDRTLAMIFEKSSTRTRLSFEAGIFQLGGHAVFMSTRDTQLGRGEPVEDSAQVISRMVDIIMIRTFEQEVIKRFADNSRVPVINGLTNEYHPCQVLADIFTYYEHRGPIAGKTVAWVGDANNMLYTWIEAAQILGFKLRLSTPPGYALDMKLVSPDSAPFYEVFEDPNEACKGADLVTTDVWTSMGFEAENEARMQAFADWCVDEEMMGHANPDALFMHCLPAHRGEEVTAGVIDGPQSVVWDEAENRLHVQKALMEFLLLGRLKH.

Carbamoyl phosphate contacts are provided by residues 56–59, glutamine 83, arginine 107, and 134–137; these read STRT and HPCQ. Residues asparagine 165, aspartate 223, and 227–228 contribute to the L-ornithine site; that span reads SM. Residues 263–264 and arginine 291 contribute to the carbamoyl phosphate site; that span reads CL.

This sequence belongs to the aspartate/ornithine carbamoyltransferase superfamily. OTCase family.

It is found in the cytoplasm. The catalysed reaction is carbamoyl phosphate + L-ornithine = L-citrulline + phosphate + H(+). It functions in the pathway amino-acid biosynthesis; L-arginine biosynthesis; L-arginine from L-ornithine and carbamoyl phosphate: step 1/3. Reversibly catalyzes the transfer of the carbamoyl group from carbamoyl phosphate (CP) to the N(epsilon) atom of ornithine (ORN) to produce L-citrulline. The polypeptide is Ornithine carbamoyltransferase (Burkholderia lata (strain ATCC 17760 / DSM 23089 / LMG 22485 / NCIMB 9086 / R18194 / 383)).